A 176-amino-acid polypeptide reads, in one-letter code: Large ribosomal subunit protein eL20A (176 aa).

This sequence belongs to the eukaryotic ribosomal protein eL20 family. In terms of assembly, component of the large ribosomal subunit (LSU). Mature yeast ribosomes consist of a small (40S) and a large (60S) subunit. The 40S small subunit contains 1 molecule of ribosomal RNA (18S rRNA) and at least 33 different proteins. The large 60S subunit contains 3 rRNA molecules (25S, 5.8S and 5S rRNA) and at least 46 different proteins. eL20 forms multiple interactions with RNA and proteins in the central protuberance, connecting components of core functional centers that are located far apart.

The protein localises to the cytoplasm. In terms of biological role, component of the ribosome, a large ribonucleoprotein complex responsible for the synthesis of proteins in the cell. The small ribosomal subunit (SSU) binds messenger RNAs (mRNAs) and translates the encoded message by selecting cognate aminoacyl-transfer RNA (tRNA) molecules. The large subunit (LSU) contains the ribosomal catalytic site termed the peptidyl transferase center (PTC), which catalyzes the formation of peptide bonds, thereby polymerizing the amino acids delivered by tRNAs into a polypeptide chain. The nascent polypeptides leave the ribosome through a tunnel in the LSU and interact with protein factors that function in enzymatic processing, targeting, and the membrane insertion of nascent chains at the exit of the ribosomal tunnel. The chain is Large ribosomal subunit protein eL20A (rpl2001) from Schizosaccharomyces pombe (strain 972 / ATCC 24843) (Fission yeast).